Consider the following 152-residue polypeptide: Nucleoside diphosphate kinase (152 aa).

Residues Lys-11, Phe-59, Arg-87, Thr-93, Arg-104, and Asn-114 each contribute to the ATP site. Catalysis depends on His-117, which acts as the Pros-phosphohistidine intermediate.

This sequence belongs to the NDK family. In terms of assembly, homotetramer. Mg(2+) is required as a cofactor.

The protein localises to the cytoplasm. The catalysed reaction is a 2'-deoxyribonucleoside 5'-diphosphate + ATP = a 2'-deoxyribonucleoside 5'-triphosphate + ADP. The enzyme catalyses a ribonucleoside 5'-diphosphate + ATP = a ribonucleoside 5'-triphosphate + ADP. In terms of biological role, major role in the synthesis of nucleoside triphosphates other than ATP. The ATP gamma phosphate is transferred to the NDP beta phosphate via a ping-pong mechanism, using a phosphorylated active-site intermediate. The protein is Nucleoside diphosphate kinase of Prochlorococcus marinus (strain MIT 9515).